Reading from the N-terminus, the 136-residue chain is 1,4-dihydroxy-2-naphthoyl-CoA hydrolase (136 aa).

D16 is a catalytic residue.

Belongs to the 4-hydroxybenzoyl-CoA thioesterase family. DHNA-CoA hydrolase subfamily.

It carries out the reaction 1,4-dihydroxy-2-naphthoyl-CoA + H2O = 1,4-dihydroxy-2-naphthoate + CoA + H(+). It functions in the pathway cofactor biosynthesis; phylloquinone biosynthesis. Its pathway is quinol/quinone metabolism; 1,4-dihydroxy-2-naphthoate biosynthesis; 1,4-dihydroxy-2-naphthoate from chorismate: step 7/7. Its function is as follows. Catalyzes the hydrolysis of 1,4-dihydroxy-2-naphthoyl-CoA (DHNA-CoA) to 1,4-dihydroxy-2-naphthoate (DHNA), a reaction involved in phylloquinone (vitamin K1) biosynthesis. The sequence is that of 1,4-dihydroxy-2-naphthoyl-CoA hydrolase from Synechococcus sp. (strain ATCC 27144 / PCC 6301 / SAUG 1402/1) (Anacystis nidulans).